Here is a 454-residue protein sequence, read N- to C-terminus: MSELFSERIPPQSIEAEQAVLGAVFLDPAALVPASEILIPEDFYRAAHQKIFHAMLRVADRGEPVDLVTVTAELAASEQLEEIGGVSYLSELADAVPTAANVEYYARIVEEKSVLRRLIRTATSIAQDGYTREDEIDVLLDEADRKIMEVSQRKHSGAFKNIKDILVQTYDNIEMLHNRDGEITGIPTGFTELDRMTSGFQRSDLIIVAARPSVGKTAFALNIAQNVATKTNENVAIFSLEMSAQQLVMRMLCAEGNINAQNLRTGKLTPEDWGKLTMAMGSLSNAGIYIDDTPSIRVSDIRAKCRRLKQESGLGMIVIDYLQLIQGSGRSKENRQQEVSEISRSLKALARELEVPVIALSQLSRSVEQRQDKRPMMSDIRESGSIEQDADIVAFLYRDDYYNKDSENKNIIEIIIAKQRNGPVGTVQLAFIKEYNKFVNLERRFDEAQIPPGA.

An N-terminal domain (NTD) region spans residues 1–149 (MSELFSERIP…LDEADRKIME (149 aa)). The tract at residues 163–176 (KDILVQTYDNIEML) is linker helix. One can recognise an SF4 helicase domain in the interval 179–445 (RDGEITGIPT…NKFVNLERRF (267 aa)). Residues 183–454 (ITGIPTGFTE…FDEAQIPPGA (272 aa)) are C-terminal domain (CTD). ATP is bound by residues S213, G215, K216, T217, and A218. The active-site Nucleophile is the E241. Residues R250 and Q362 each coordinate ATP. 3 residues coordinate ssDNA: R381, E382, and G384. ATP-binding residues include K418, Q419, and R420.

This sequence belongs to the helicase family. DnaB subfamily. Homohexamer. Interacts with DnaG primase, as DnaB(6):DnaG(3). Interacts with the N-terminus of DnaI (shown with DnaI of B.subtilis), forms a helicase DnaB(6):DnaI(6) complex. The DnaB-DnaI complex is disrupted by DnaD (DnaD and DnaI from B.subtilis). A stable complex DnaI(6):DnaB(6):DnaG(3) fragment can be isolated; DnaI and DnaG do not contact each other (DnaI in this complex is derived from B.subtilis). Forms a complex with DNA clamp loader protein tau (shown with B.subtilis HolA) tau(3):DnaB(6); a single ATP hydrolysis even is sufficient for complex formation.

It catalyses the reaction Couples ATP hydrolysis with the unwinding of duplex DNA at the replication fork by translocating in the 5'-3' direction. This creates two antiparallel DNA single strands (ssDNA). The leading ssDNA polymer is the template for DNA polymerase III holoenzyme which synthesizes a continuous strand.. The catalysed reaction is ATP + H2O = ADP + phosphate + H(+). Its function is as follows. The main replicative DNA helicase, it participates in initiation and elongation during chromosome replication. Travels ahead of the DNA replisome, separating double-stranded (ds)DNA into templates for DNA synthesis. Binding of single-stranded (ss)DNA to the hexamer suggests a 2-nucleotide step size for the helicase and a hand-over-hand mechanism of DNA unwinding. Has ssDNA-stimulated ATPase activity. DnaG primase stimulates the helicase activity (the helicase direction was not determine but is probably 5'-3'). Loaded onto DNA by helicase loader DnaI (shown with DnaI of B.subtilis); ATP-binding enhances loading and subsequent ATP hydrolysis dissociates the complex, leaving helicase on the DNA. Binds ssDNA and less well dsDNA, in the presence of ADPNP (probably 5'-adenylyl beta, gamma-imidodiphosphate, but not ATP) binding to both DNAs is improved. This is Replicative DNA helicase DnaB from Geobacillus stearothermophilus (Bacillus stearothermophilus).